A 554-amino-acid polypeptide reads, in one-letter code: Wee1-like protein kinase 2-C (554 aa).

2 disordered regions span residues 1-86 and 145-183; these read MRTA…GGEC and TLVNVNPFTPQSYRQTHFQPNGKRKERPEDDCSSDSQMK. Polar residues-rich tracts occupy residues 38 to 48 and 147 to 163; these read SPVSSWRTNNC and VNVNPFTPQSYRQTHFQ. Residues 213–487 form the Protein kinase domain; that stretch reads FLEIEKIGAG…AKNSVLRRCV (275 aa). Residues 219 to 227 and lysine 242 contribute to the ATP site; that span reads IGAGEFGSV. Catalysis depends on aspartate 340, which acts as the Proton acceptor. Residues asparagine 345 and aspartate 377 each coordinate Mg(2+). Residues 490-516 are a coiled coil; the sequence is AAELQKQLNVEKFKTAMLERELQAAKL.

Belongs to the protein kinase superfamily. Ser/Thr protein kinase family. WEE1 subfamily.

The protein localises to the nucleus. The catalysed reaction is L-tyrosyl-[protein] + ATP = O-phospho-L-tyrosyl-[protein] + ADP + H(+). Functionally, protein tyrosine kinase that phosphorylates and inhibits cdk1 and acts as a regulator of meiosis in oocytes. Required to ensure the meiotic cell cycle in oocytes by phosphorylating cdk1 at 'Tyr-15', leading to inhibit cdk1 activity and prevent meiosis. The chain is Wee1-like protein kinase 2-C (wee2-c) from Xenopus laevis (African clawed frog).